The primary structure comprises 789 residues: Potassium transporter 4 (789 aa).

Topologically, residues 1–32 are cytoplasmic; the sequence is MAPAESGVSPRRNPSQLSWMNLSSNLILAYQS. A Phosphoserine modification is found at serine 9. The chain crosses the membrane as a helical span at residues 33-53; sequence FGVVYGDLSTSPLYVFPSTFI. Topologically, residues 54-68 are extracellular; it reads GKLHKHHNEDAVFGA. A helical transmembrane segment spans residues 69-89; that stretch reads FSLIFWTLTLIPLLKYLLVLL. The Cytoplasmic portion of the chain corresponds to 90–154; it reads SADDNGEGGT…FLEKHKRLRT (65 aa). Residues 155 to 175 traverse the membrane as a helical segment; the sequence is ALLLVVLFGAAMVIGDGVLTP. The Extracellular segment spans residues 176-195; that stretch reads ALSVLSSLSGLQATEKNVTD. The chain crosses the membrane as a helical span at residues 196–216; the sequence is GELLVLACVILVGLFALQHCG. Residues 217-219 are Cytoplasmic-facing; that stretch reads THR. The chain crosses the membrane as a helical span at residues 220 to 240; sequence VAFMFAPIVIIWLISIFFIGL. Over 241–270 the chain is Extracellular; sequence YNIIRWNPKIIHAVSPLYIIKFFRVTGQDG. A helical membrane pass occupies residues 271 to 291; that stretch reads WISLGGVLLSVTGTEAMFANL. At 292-300 the chain is on the cytoplasmic side; the sequence is GHFTSVSIR. A helical membrane pass occupies residues 301–321; it reads VAFAVVVYPCLVVQYMGQAAF. Topologically, residues 322-340 are extracellular; the sequence is LSKNLGSIPNSFYDSVPDP. A helical transmembrane segment spans residues 341–361; the sequence is VFWPVFVIATLAAIVGSQAVI. The Cytoplasmic segment spans residues 362-392; that stretch reads TTTFSIIKQCHALGCFPRIKVVHTSKHIYGQ. Residues 393-413 traverse the membrane as a helical segment; sequence IYIPEINWILMILTLAMAIGF. Residues 414–424 are Extracellular-facing; that stretch reads RDTTLIGNAYG. Residues 425 to 445 traverse the membrane as a helical segment; that stretch reads IACMVVMFITTFFMALVIVVV. Topologically, residues 446–450 are cytoplasmic; it reads WQKSC. A helical membrane pass occupies residues 451 to 471; sequence FLAALFLGTLWIIEGVYLSAA. Residues 472–478 lie on the Extracellular side of the membrane; the sequence is LMKVTEG. Residues 479 to 499 form a helical membrane-spanning segment; the sequence is GWVPFVLTFIFMIAMYVWHYG. Residues 500–789 are Cytoplasmic-facing; that stretch reads TRRKYSFDLH…LIEVGMIYYV (290 aa).

The protein belongs to the HAK/KUP transporter (TC 2.A.72.3) family. Detected at very low levels in roots, stems, leaves and flowers of mature plants and strongly expressed in the roots of potassium-starved plants.

The protein localises to the cell membrane. Its function is as follows. High-affinity potassium transporter. The chain is Potassium transporter 4 (POT4) from Arabidopsis thaliana (Mouse-ear cress).